We begin with the raw amino-acid sequence, 605 residues long: Elongation factor 4 (605 aa).

The tr-type G domain maps to 11–193 (KNIRNFSIIA…RLVDVIPAPE (183 aa)). Residues 23-28 (DHGKST) and 140-143 (NKID) each bind GTP.

It belongs to the TRAFAC class translation factor GTPase superfamily. Classic translation factor GTPase family. LepA subfamily.

The protein resides in the cell inner membrane. It carries out the reaction GTP + H2O = GDP + phosphate + H(+). Required for accurate and efficient protein synthesis under certain stress conditions. May act as a fidelity factor of the translation reaction, by catalyzing a one-codon backward translocation of tRNAs on improperly translocated ribosomes. Back-translocation proceeds from a post-translocation (POST) complex to a pre-translocation (PRE) complex, thus giving elongation factor G a second chance to translocate the tRNAs correctly. Binds to ribosomes in a GTP-dependent manner. The polypeptide is Elongation factor 4 (Acinetobacter baylyi (strain ATCC 33305 / BD413 / ADP1)).